The primary structure comprises 264 residues: Orotidine 5'-phosphate decarboxylase (264 aa).

Substrate is bound by residues Asp40, 62 to 64 (KTH), 93 to 102 (DRKFADIGNT), Tyr214, and Arg233. The active-site Proton donor is the Lys95.

It belongs to the OMP decarboxylase family.

The enzyme catalyses orotidine 5'-phosphate + H(+) = UMP + CO2. The protein operates within pyrimidine metabolism; UMP biosynthesis via de novo pathway; UMP from orotate: step 2/2. The polypeptide is Orotidine 5'-phosphate decarboxylase (ura4) (Schizosaccharomyces pombe (strain 972 / ATCC 24843) (Fission yeast)).